Consider the following 405-residue polypeptide: Solute carrier family 35 member E2B (405 aa).

The tract at residues 1–28 is disordered; sequence MSSSVKTPALEELVPGSEEKPKGRSPLS. A run of 10 helical transmembrane segments spans residues 81–101, 106–126, 142–162, 167–187, 195–215, 219–241, 264–284, 296–316, 326–346, and 347–367; these read LWFF…SLLG, MLGA…TLVP, FLMT…LGLV, VAVS…VIMS, TGLL…LCTA, SFNV…QNVF, AAAV…PVIG, VVLL…TAYA, FSVA…IVFG, and NKIT…VLLY. The interval 380–405 is disordered; it reads SLAAATGRAPDDTVEPLLPQDPRQHP.

The protein belongs to the TPT transporter family. SLC35E subfamily.

The protein resides in the membrane. Functionally, putative transporter. This chain is Solute carrier family 35 member E2B (SLC35E2B), found in Homo sapiens (Human).